Here is a 255-residue protein sequence, read N- to C-terminus: Ribonuclease HII (255 aa).

The RNase H type-2 domain occupies 72 to 255 (AIICGIDEVG…KSFEPIKSLL (184 aa)). A divalent metal cation-binding residues include aspartate 78, glutamate 79, and aspartate 170.

The protein belongs to the RNase HII family. The cofactor is Mn(2+). Requires Mg(2+) as cofactor.

Its subcellular location is the cytoplasm. It carries out the reaction Endonucleolytic cleavage to 5'-phosphomonoester.. Functionally, endonuclease that specifically degrades the RNA of RNA-DNA hybrids. The polypeptide is Ribonuclease HII (Staphylococcus aureus (strain MSSA476)).